Here is a 193-residue protein sequence, read N- to C-terminus: UPF0301 protein Bfl251 (193 aa).

Belongs to the UPF0301 (AlgH) family.

This chain is UPF0301 protein Bfl251, found in Blochmanniella floridana.